A 79-amino-acid chain; its full sequence is Cell division topological specificity factor (79 aa).

It belongs to the MinE family.

Prevents the cell division inhibition by proteins MinC and MinD at internal division sites while permitting inhibition at polar sites. This ensures cell division at the proper site by restricting the formation of a division septum at the midpoint of the long axis of the cell. This is Cell division topological specificity factor from Nitratiruptor sp. (strain SB155-2).